The primary structure comprises 398 residues: Inner membrane protein YjgN (398 aa).

The Cytoplasmic portion of the chain corresponds to 1–24 (MAQVINEMDVPSHSFVFHGTGERY). Residues 25 to 45 (FLICVVNVLLTIITLGIYLPW) traverse the membrane as a helical segment. The Periplasmic segment spans residues 46–73 (ALMKCKRYLYANMEVNGQRFSYGITGGN). A helical transmembrane segment spans residues 74-94 (VFVSCLFFVFFYFAILMTVSA). Residue Asp-95 is a topological domain, cytoplasmic. The helical transmembrane segment at 96 to 116 (MPLVGCVLTLLLLVLLIFMAA) threads the bilayer. At 117–142 (KGLRHQALMTSLNGVRFSFNCSMKGF) the chain is on the periplasmic side. Residues 143–163 (WWVTFFLPILMAIGMGTVFFI) form a helical membrane-spanning segment. At 164 to 175 (STKMLPANSSSS) the chain is on the cytoplasmic side. The helical transmembrane segment at 176–196 (VIISMVLMAIVGIVSIGIFNG) threads the bilayer. Residues 197–228 (TLYSLVMSFLWSNTSFGIHRFKVKLDTTYCIK) lie on the Periplasmic side of the membrane. A helical transmembrane segment spans residues 229-249 (YAILAFLALLPFLAVAGYIIF). The Cytoplasmic segment spans residues 250–278 (DQILNAYDSSVYANDDIENLQQFMEMQRK). The helical transmembrane segment at 279–299 (MIIAQLIYYFGIAVSTSYLTV) threads the bilayer. Residues 300–333 (SLRNHFMSNLSLNDGRIRFRLTLTYHGMLYRMCA) are Periplasmic-facing. Residues 334–354 (LVVISGITGGLAYPLLKIWMI) form a helical membrane-spanning segment. The Cytoplasmic portion of the chain corresponds to 355–398 (DWQAKNTYLLGDLDDLPLINKEEQPDKGFLASISRGVMPSLPFL).

It is found in the cell inner membrane. In Escherichia coli (strain K12), this protein is Inner membrane protein YjgN (yjgN).